The chain runs to 2510 residues: Highly reducing polyketide synthase g433 (2510 aa).

The tract at residues 1–54 is disordered; that stretch reads MAPGRTDVTVAENGNGLHTAHNGVSNGTSNGTNGTSHTSNGTNSSAKTTSNGVH. Low complexity predominate over residues 22–45; it reads NGVSNGTSNGTNGTSHTSNGTNSS. Residues 58–477 enclose the Ketosynthase family 3 (KS3) domain; the sequence is DIPIAIVGMG…GANAHAVIDS (420 aa). Active-site for beta-ketoacyl synthase activity residues include Cys229, His365, and His400. The tract at residues 574–880 is malonyl-CoA:ACP transacylase (MAT) domain; it reads FVFTGQGAQW…VPTLVRGQND (307 aa). The tract at residues 942–1070 is N-terminal hotdog fold; it reads HDLLGCQVFE…GQVKAGRADS (129 aa). The dehydratase (DH) domain stretch occupies residues 942-1226; it reads HDLLGCQVFE…NLRLAPAADD (285 aa). Residues 942–1229 enclose the PKS/mFAS DH domain; the sequence is HDLLGCQVFE…LAPAADDTGG (288 aa). Residue His974 is the Proton acceptor; for dehydratase activity of the active site. A C-terminal hotdog fold region spans residues 1083–1229; the sequence is PRKVSSTRWY…LAPAADDTGG (147 aa). Asp1144 functions as the Proton donor; for dehydratase activity in the catalytic mechanism. Positions 1395 to 1574 are methyltransferase (CMet) domain; it reads DFLGLVSHDK…FDGAEAVIYD (180 aa). Residues 1787-2097 are enoyl reductase (ER) (ER) domain; the sequence is GSLKTLRWVQ…KGQHMGKLVI (311 aa). Residues 2122-2296 are ketoreductase (KR) domain; that stretch reads SYLLVGGLGG…ASVLDISIIE (175 aa). Residues 2419 to 2496 form the Carrier domain; sequence SSVSFLANEI…KLGEAAAEGL (78 aa). Ser2456 is modified (O-(pantetheine 4'-phosphoryl)serine).

It functions in the pathway mycotoxin biosynthesis. Functionally, highly reducing polyketide synthase; part of the gene cluster that mediates the biosynthesis of 1233A, a natural compound known as an inhibitor of HMG-CoA synthase in the mevalonate pathway and with antibacterial and antifungal activities. The highly reducing polyketide synthase g433 gene is responsible for the 1233A backbone biosynthesis and the cytochrome P450 monooxygenase g430 catalyzes oxidation of the backbone. This is Highly reducing polyketide synthase g433 from Fusarium sp.